We begin with the raw amino-acid sequence, 1761 residues long: 6-methylsalicylic acid synthase AOL_s00215g283 (1761 aa).

Residues 18–443 (QDDIAIIGMA…GTVAHAVIEQ (426 aa)) form the Ketosynthase family 3 (KS3) domain. Catalysis depends on for beta-ketoacyl synthase activity residues cysteine 190, histidine 325, and histidine 367. The tract at residues 554 to 870 (VWVFSGHGAH…ALGKLHCHGA (317 aa)) is malonyl-CoA:ACP transacylase (MAT) domain. Serine 641 (for malonyltransferase activity) is an active-site residue. The segment at 918 to 1038 (HVLLGAKHQV…GHVANNEWSK (121 aa)) is N-terminal hotdog fold. The interval 918–1187 (HVLLGAKHQV…NGMRFSAVEG (270 aa)) is dehydratase (DH) domain. The region spanning 918–1191 (HVLLGAKHQV…FSAVEGTPGA (274 aa)) is the PKS/mFAS DH domain. Histidine 950 functions as the Proton acceptor; for dehydratase activity in the catalytic mechanism. The tract at residues 1050-1191 (LPSVKPSFAT…FSAVEGTPGA (142 aa)) is C-terminal hotdog fold. Aspartate 1113 acts as the Proton donor; for dehydratase activity in catalysis. The tract at residues 1399-1587 (GTYLITGGLG…IVSFLWTSWN (189 aa)) is ketoreductase (KR) domain. Positions 1654–1680 (PRKRAESSGTEAVSKGEVSEKAPVPKS) are disordered. The 76-residue stretch at 1686 to 1761 (EYLQNAISEC…HLVKWFEEKI (76 aa)) folds into the Carrier domain. Residue serine 1721 is modified to O-(pantetheine 4'-phosphoryl)serine.

The catalysed reaction is 3 malonyl-CoA + acetyl-CoA + NADPH + 3 H(+) = 6-methylsalicylate + 3 CO2 + NADP(+) + 4 CoA + H2O. It participates in secondary metabolite biosynthesis; terpenoid biosynthesis. In terms of biological role, 6-methylsalicylic acid synthase; part of the gene cluster that mediates the biosynthesis of sesquiterpenyl epoxy-cyclohexenoids (SECs) such as anthrobotrisins and arthrosporols, metabolites that possess a novel hybrid carbon skeleton consisting of a polyketide-derived epoxycyclohexenol combined with a terpenoid-derived monocyclic sesquiterpenol substructure (PKS-PTS hybrid). The SEC pathway plays an important role for fungal soil colonization via decreasing fungal nematode-capturing ability. Within the pathway, the polyketide synthase (PKS) AOL_s00215g283 catalyzes the biosynthesis of 6-methylsalicylic acid (6-MSA) via condensation of 1 acetate and 3 malonate units. AOL_s00215g283 performs a series of programmed reactions including Claisen condensation, dehydration, reduction, and cyclization to yield 6-MSA. The pathway begins with the biosynthesis of 6-methylsalicylic acid (6-MSA), the first precursor of the polyketide-derived epoxycyclohexenol in arthrosporols, by the polyketide synthase (PKS) AOL_s00215g283. The 6-methylsalicylic acid decarboxylase AOL_s00215g281 then catalyzes the decarboxylation of 6-methylsalicylic acid to yield m-cresol. The cytochrome P450 monooxygenase AOL_s00215g282 further oxidizes m-cresol to yield toluquinol. With the assistance of the oxidoreductase AOL_s00215g277, the polyprenyl transferase AOL_s00215g276 catalyzes the farnesylation of toluquinol to produce farnesyl hydroquinone, the hybrid precursor for biosynthesis of SECs. Farnesyl hydroquinone undergoes epoxidation and then subsequent dehydrogenation to form farnesyl epoxy-quinone, the first and simplest SEC. The cytochrome P450 monooxygenase AOL_s00215g278 and the FAD-dependent monooxygenase AOL_s00215g279 might be involved in the oxygenation of the phenol moiety, most likely in the epoxy formation. The cytochrome P450 monooxygenases AOL_s00215g274 and AOL_s00215g280 are involved in specific regional ketone reductions at respectively C-4 and C-1 of farnesyl epoxy-quinone PubMed:33823587. The sequence is that of 6-methylsalicylic acid synthase AOL_s00215g283 from Arthrobotrys oligospora (strain ATCC 24927 / CBS 115.81 / DSM 1491) (Nematode-trapping fungus).